Reading from the N-terminus, the 297-residue chain is Pyridoxal 5'-phosphate synthase subunit SNZ1 (297 aa).

Aspartate 23 is a binding site for D-ribose 5-phosphate. Lysine 80 acts as the Schiff-base intermediate with D-ribose 5-phosphate in catalysis. Glycine 152 is a D-ribose 5-phosphate binding site. Position 164 (arginine 164) interacts with D-glyceraldehyde 3-phosphate. D-ribose 5-phosphate is bound by residues glycine 214 and 235–236; that span reads GS.

Belongs to the PdxS/SNZ family. As to quaternary structure, homohexamer. Interacts with AIM18.

It catalyses the reaction aldehydo-D-ribose 5-phosphate + D-glyceraldehyde 3-phosphate + L-glutamine = pyridoxal 5'-phosphate + L-glutamate + phosphate + 3 H2O + H(+). It participates in cofactor biosynthesis; pyridoxal 5'-phosphate biosynthesis. Functionally, catalyzes the formation of pyridoxal 5'-phosphate from ribose 5-phosphate (RBP), glyceraldehyde 3-phosphate (G3P) and ammonia. The ammonia is provided by a SNO isoform. Can also use ribulose 5-phosphate and dihydroxyacetone phosphate as substrates, resulting from enzyme-catalyzed isomerization of RBP and G3P, respectively. The chain is Pyridoxal 5'-phosphate synthase subunit SNZ1 (SNZ1) from Saccharomyces cerevisiae (strain ATCC 204508 / S288c) (Baker's yeast).